The sequence spans 55 residues: Protein CADMIUM TOLERANCE 1 (55 aa).

Residues 24-40 traverse the membrane as a helical segment; it reads GCLYACIFTALCCFCCY.

This sequence belongs to the CYSTM1 family.

Its subcellular location is the cell membrane. The protein localises to the secreted. It localises to the cell wall. Confers resistance to heavy metal ions (e.g. cadmium (CdCl(2)) and copper (CuCl(2))) by chelating them at the plasma membrane of root cells, thus stopping their entry and reducing their accumulation. This Digitaria ciliaris (Southern crabgrass) protein is Protein CADMIUM TOLERANCE 1.